We begin with the raw amino-acid sequence, 343 residues long: Anthranilate phosphoribosyltransferase (343 aa).

5-phospho-alpha-D-ribose 1-diphosphate is bound by residues G83, 86–87 (GD), T91, 93–96 (NIST), 111–119 (KHGGRSVSS), and S123. G83 contacts anthranilate. Residue S95 coordinates Mg(2+). Residue R169 coordinates anthranilate. 2 residues coordinate Mg(2+): D228 and E229.

It belongs to the anthranilate phosphoribosyltransferase family. As to quaternary structure, homodimer. Mg(2+) is required as a cofactor.

The catalysed reaction is N-(5-phospho-beta-D-ribosyl)anthranilate + diphosphate = 5-phospho-alpha-D-ribose 1-diphosphate + anthranilate. It functions in the pathway amino-acid biosynthesis; L-tryptophan biosynthesis; L-tryptophan from chorismate: step 2/5. Functionally, catalyzes the transfer of the phosphoribosyl group of 5-phosphorylribose-1-pyrophosphate (PRPP) to anthranilate to yield N-(5'-phosphoribosyl)-anthranilate (PRA). The protein is Anthranilate phosphoribosyltransferase of Thiobacillus denitrificans (strain ATCC 25259 / T1).